The sequence spans 387 residues: Putative ankyrin repeat protein RBE_0984 (387 aa).

ANK repeat units follow at residues 50–79, 88–119, 123–154, 159–188, and 210–239; these read YGNT…DKDI, HRET…AINV, RKHT…VINV, HKDS…KENI, and VCKM…LKGE. 2 coiled-coil regions span residues 251–278 and 311–352; these read FEDI…KKCE and SISA…ALEK.

The chain is Putative ankyrin repeat protein RBE_0984 from Rickettsia bellii (strain RML369-C).